The chain runs to 349 residues: Phosphoribosylformylglycinamidine cyclo-ligase (349 aa).

The protein belongs to the AIR synthase family.

It is found in the cytoplasm. It carries out the reaction 2-formamido-N(1)-(5-O-phospho-beta-D-ribosyl)acetamidine + ATP = 5-amino-1-(5-phospho-beta-D-ribosyl)imidazole + ADP + phosphate + H(+). The protein operates within purine metabolism; IMP biosynthesis via de novo pathway; 5-amino-1-(5-phospho-D-ribosyl)imidazole from N(2)-formyl-N(1)-(5-phospho-D-ribosyl)glycinamide: step 2/2. The polypeptide is Phosphoribosylformylglycinamidine cyclo-ligase (Jannaschia sp. (strain CCS1)).